The primary structure comprises 69 residues: Copper chaperone CopZ (69 aa).

In terms of domain architecture, HMA spans 2-68 (EQKTLQVEGM…AIEDQGYDVA (67 aa)). Residues C13 and C16 each coordinate Cu cation.

As to quaternary structure, monomer in the absence of copper. Homodimer in the presence of copper ions. Forms a heterodimer (electrostatic interactions) with CopA during the transfer of Cu(+).

The protein resides in the cytoplasm. Chaperone that serves for the intracellular sequestration and transport of Cu(+). Delivers Cu(+) to the copper-transporting ATPase CopA. Functions in E.coli to transfer Cu(+) to CopA missing its first metal-binding domain. This Bacillus subtilis (strain 168) protein is Copper chaperone CopZ (copZ).